A 114-amino-acid chain; its full sequence is MSSMQFGAATEFSNKCGVTLMNTPIGRVVAEVMGAKEGVELTEYPSMIRVDGVKLLSFDYDELTEALGEEFDGSIFEEISSTHYGRMVHLDDKTMLFASPEDAAEYIGFDLTAK.

Belongs to the TmoD/XamoD family. In terms of assembly, the propane 2-monooxygenase multicomponent enzyme system is composed of an electron transfer component and a monooxygenase component interacting with the effector protein MimD. The electron transfer component is composed of a reductase (MimB), and the monooxygenase component is formed by a large subunit (MimA) and a small subunit (MimC).

Its function is as follows. Effector component of the propane 2-monooxygenase multicomponent enzyme system which is involved in the degradation of propane via the O2-dependent hydroxylation of propane. The polypeptide is Propane 2-monooxygenase, effector component (Mycolicibacterium smegmatis (strain ATCC 700084 / mc(2)155) (Mycobacterium smegmatis)).